Here is a 171-residue protein sequence, read N- to C-terminus: Adenine phosphoribosyltransferase (171 aa).

Belongs to the purine/pyrimidine phosphoribosyltransferase family. As to quaternary structure, homodimer.

It localises to the cytoplasm. The enzyme catalyses AMP + diphosphate = 5-phospho-alpha-D-ribose 1-diphosphate + adenine. It participates in purine metabolism; AMP biosynthesis via salvage pathway; AMP from adenine: step 1/1. Catalyzes a salvage reaction resulting in the formation of AMP, that is energically less costly than de novo synthesis. The sequence is that of Adenine phosphoribosyltransferase from Christiangramia forsetii (strain DSM 17595 / CGMCC 1.15422 / KT0803) (Gramella forsetii).